Reading from the N-terminus, the 224-residue chain is Dickkopf-related protein 4 (224 aa).

An N-terminal signal peptide occupies residues 1–18; the sequence is MVAAVLLGLSWLCSPLGA. Residues 41 to 90 are DKK-type Cys-1; it reads CLSDTDCNTRKFCLQPRDEKPFCATCRGLRRRCQRDAMCCPGTLCVNDVC. Positions 109-139 are disordered; it reads GTHAEGTTGHPVQENQPKRKPSIKKSQGRKG. Over residues 126 to 136 the composition is skewed to basic residues; the sequence is KRKPSIKKSQG. 5 cysteine pairs are disulfide-bonded: cysteine 145–cysteine 157, cysteine 151–cysteine 166, cysteine 156–cysteine 194, cysteine 176–cysteine 202, and cysteine 196–cysteine 218. The interval 145 to 218 is DKK-type Cys-2; that stretch reads CLRTFDCGPG…NRQHARLRVC (74 aa).

This sequence belongs to the dickkopf family. In terms of assembly, interacts with LRP5 and LRP6. In terms of processing, appears to be not glycosylated. Post-translationally, can be proteolytically processed by a furin-like protease. In terms of tissue distribution, expressed in cerebellum, T-cells, esophagus and lung.

Its subcellular location is the secreted. Its function is as follows. Antagonizes canonical Wnt signaling by inhibiting LRP5/6 interaction with Wnt and by forming a ternary complex with the transmembrane protein KREMEN that promotes internalization of LRP5/6. DKKs play an important role in vertebrate development, where they locally inhibit Wnt regulated processes such as antero-posterior axial patterning, limb development, somitogenesis and eye formation. In the adult, Dkks are implicated in bone formation and bone disease, cancer and Alzheimer disease. This chain is Dickkopf-related protein 4 (DKK4), found in Homo sapiens (Human).